We begin with the raw amino-acid sequence, 267 residues long: Exodeoxyribonuclease III (267 aa).

Position 34 (glutamate 34) interacts with Mg(2+). The active site involves tyrosine 109. Positions 151, 153, and 258 each coordinate Mg(2+). Residue aspartate 151 is the Proton donor/acceptor of the active site.

This sequence belongs to the DNA repair enzymes AP/ExoA family. As to quaternary structure, monomer. It depends on Mg(2+) as a cofactor. Requires Mn(2+) as cofactor.

It catalyses the reaction Exonucleolytic cleavage in the 3'- to 5'-direction to yield nucleoside 5'-phosphates.. In terms of biological role, major apurinic-apyrimidinic endonuclease of E.coli. It removes the damaged DNA at cytosines and guanines by cleaving on the 3'-side of the AP site by a beta-elimination reaction. The chain is Exodeoxyribonuclease III (xthA) from Haemophilus influenzae (strain ATCC 51907 / DSM 11121 / KW20 / Rd).